Here is a 183-residue protein sequence, read N- to C-terminus: CyanoP (183 aa).

Residues 1–19 (MLQRFFATALAIFVVLLGG) form the signal peptide. The N-palmitoyl cysteine moiety is linked to residue cysteine 20. Cysteine 20 carries S-diacylglycerol cysteine lipidation. Zn(2+) contacts are provided by aspartate 31, aspartate 34, aspartate 54, histidine 58, threonine 63, glutamate 87, aspartate 91, histidine 142, glutamate 163, and glutamate 164.

Belongs to the PsbP family. CyanoP subfamily. As to quaternary structure, monomer. Present in very small amounts in PSII. The cofactor is Zn(2+).

It is found in the cellular thylakoid membrane. Plays a role in the early stages of photosystem II (PSII) assembly; binds to D2 (psbD) and may facilitate its incorporation into PSII. Present in less than 1% of PSII preparations. The sequence is that of CyanoP from Thermosynechococcus vestitus (strain NIES-2133 / IAM M-273 / BP-1).